We begin with the raw amino-acid sequence, 149 residues long: Calmodulin-2 (149 aa).

Alanine 2 bears the N-acetylalanine mark. EF-hand domains are found at residues 8 to 43 (EQIA…LGQN), 44 to 79 (PTEG…KMKD), 81 to 116 (DSEE…PGEK), and 117 to 149 (LTDE…MTSK). Residues aspartate 21, aspartate 23, asparagine 25, asparagine 27, glutamate 32, aspartate 57, aspartate 59, asparagine 61, threonine 63, glutamate 68, aspartate 94, aspartate 96, asparagine 98, and glutamate 105 each coordinate Ca(2+). At lysine 116 the chain carries N6,N6,N6-trimethyllysine. Ca(2+)-binding residues include aspartate 130, aspartate 132, aspartate 134, glutamine 136, and glutamate 141.

The protein belongs to the calmodulin family.

Its function is as follows. Calmodulin mediates the control of a large number of enzymes, ion channels and other proteins by Ca(2+). Among the enzymes to be stimulated by the calmodulin-Ca(2+) complex are a number of protein kinases and phosphatases. This Branchiostoma floridae (Florida lancelet) protein is Calmodulin-2 (CAM2).